The primary structure comprises 211 residues: Large ribosomal subunit protein bL25 (211 aa).

The segment at 175–211 (VSEPVEQDLGEESETEEEGAEGEKPAESTGEEPGDDE) is disordered. The span at 179–194 (VEQDLGEESETEEEGA) shows a compositional bias: acidic residues.

It belongs to the bacterial ribosomal protein bL25 family. CTC subfamily. As to quaternary structure, part of the 50S ribosomal subunit; part of the 5S rRNA/L5/L18/L25 subcomplex. Contacts the 5S rRNA. Binds to the 5S rRNA independently of L5 and L18.

Functionally, this is one of the proteins that binds to the 5S RNA in the ribosome where it forms part of the central protuberance. The polypeptide is Large ribosomal subunit protein bL25 (Kocuria rhizophila (strain ATCC 9341 / DSM 348 / NBRC 103217 / DC2201)).